The primary structure comprises 422 residues: Cytochrome P-450 monooxygenase DoxA (422 aa).

Position 369 (C369) interacts with heme.

The protein belongs to the cytochrome P450 family. Monomer. It depends on heme as a cofactor.

The protein localises to the cytoplasm. The enzyme catalyses 13-deoxydaunorubicin + NADPH + O2 + H(+) = 13-dihydrodaunorubicin + NADP(+) + H2O. The catalysed reaction is 13-dihydrodaunorubicin + NADPH + O2 + H(+) = daunorubicin + NADP(+) + 2 H2O. It carries out the reaction 13-deoxycarminomycin + NADPH + O2 + H(+) = 13-dihydrocarminomycin + NADP(+) + H2O. It catalyses the reaction 13-dihydrocarminomycin + NADPH + O2 + H(+) = carminomycin + NADP(+) + 2 H2O. It functions in the pathway antibiotic biosynthesis; daunorubicin biosynthesis. The protein operates within antibiotic biosynthesis; carminomycin biosynthesis. Its activity is regulated as follows. Strongly inhibited by dithiothreitol and high ionic strength buffers. Involved in the biosynthesis of the anthracyclines carminomycin and daunorubicin (daunomycin) which are aromatic polyketide antibiotics that exhibit high cytotoxicity and are widely applied in the chemotherapy of a variety of cancers. In vivo, DoxA catalyzes the C-13 hydroxylation of 13-deoxycarminomycin and 13-deoxydaunorubicin to yield 13-dihydrocarminomycin and 13-dihydrodaunorubicin, respectively, as well as the oxidation of these 13-dihydro-anthracyclines to their respective 13-keto forms, carminomycin and daunorubicin. In vitro, it also catalyzes the C-14 hydroxylation of daunorubicin to form doxorubicin (adriamycin), although this strain is not a doxorubicin producer. It is not able to accept anthracyclinones (aglycones) and anthracyclines with a 10-carbomethoxyl moiety. 13-oxidation of the anthracyclines possessing the 4-methoxy substitution is greatly favored. The anthracycline analog desacetyladriamycin can be oxidized to 10-hydroxydesacetyladriamycin. It can only use NADP. DoxA acts jointly with DauV. This chain is Cytochrome P-450 monooxygenase DoxA (doxA), found in Streptomyces sp. (strain C5).